The primary structure comprises 193 residues: Potassium-transporting ATPase KdpC subunit (193 aa).

Residues 14–34 (ITFTFLVLCGLVYPLIVTGIA) form a helical membrane-spanning segment.

Belongs to the KdpC family. The system is composed of three essential subunits: KdpA, KdpB and KdpC.

It localises to the cell membrane. In terms of biological role, part of the high-affinity ATP-driven potassium transport (or Kdp) system, which catalyzes the hydrolysis of ATP coupled with the electrogenic transport of potassium into the cytoplasm. This subunit acts as a catalytic chaperone that increases the ATP-binding affinity of the ATP-hydrolyzing subunit KdpB by the formation of a transient KdpB/KdpC/ATP ternary complex. In Bacillus cereus (strain ATCC 10987 / NRS 248), this protein is Potassium-transporting ATPase KdpC subunit.